We begin with the raw amino-acid sequence, 1124 residues long: DNA-directed RNA polymerase subunit Rpo2 (1124 aa).

Zn(2+)-binding residues include Cys1061, Cys1064, Cys1079, and His1082.

This sequence belongs to the RNA polymerase beta chain family. Part of the 13-subunit RNA polymerase complex. Requires Zn(2+) as cofactor.

The protein resides in the cytoplasm. It catalyses the reaction RNA(n) + a ribonucleoside 5'-triphosphate = RNA(n+1) + diphosphate. Functionally, DNA-dependent RNA polymerase (RNAP) catalyzes the transcription of DNA into RNA using the four ribonucleoside triphosphates as substrates. This subunit is involved in DNA promoter recognition. This is DNA-directed RNA polymerase subunit Rpo2 from Saccharolobus solfataricus (strain ATCC 35092 / DSM 1617 / JCM 11322 / P2) (Sulfolobus solfataricus).